The primary structure comprises 459 residues: MTILGTTFGMVFSLLQVVSGESGYAQNGDLEDAELDDYSFSCYSQLEVNGSQHSLTCAFEDPDVNITNLEFEICGALVEVKCLNFRKLQEIYFIETKKFLLIGKSNICVKVGEKSLTCKKIDLTTIVKPEAPFDLSVVYREGANDFVVTFNTSHLQKKYVKVLMHDVAYRQEKDENKWTHVNLSSTKLTLLQRKLQPAAMYEIKVRSIPDHYFKGFWSEWSPSYYFRTPEINNSSGEMDPILLTISILSFFSVALLVILACVLWKKRIKPIVWPSLPDHKKTLEHLCKKPRKNLNVSFNPESFLDCQIHRVDDIQARDEVEGFLQDTFPQQLEESEKQRLGGDVQSPNCPSEDVVITPESFGRDSSLTCLAGNVSACDAPILSSSRSLDCRESGKNGPHVYQDLLLSLGTTNSTLPPPFSLQSGILTLNPVAQGQPILTSLGSNQEEAYVTMSSFYQNQ.

Residues 1–20 (MTILGTTFGMVFSLLQVVSG) form the signal peptide. Residues 21–239 (ESGYAQNGDL…EINNSSGEMD (219 aa)) are Extracellular-facing. Cys-42 and Cys-57 form a disulfide bridge. Residues Asn-49 and Asn-65 are each glycosylated (N-linked (GlcNAc...) asparagine). Cystine bridges form between Cys-74–Cys-82 and Cys-108–Cys-118. Residues 131-231 (APFDLSVVYR…PSYYFRTPEI (101 aa)) enclose the Fibronectin type-III domain. N-linked (GlcNAc...) asparagine glycans are attached at residues Asn-151 and Asn-182. Positions 217–221 (WSEWS) match the WSXWS motif motif. Residues Asn-232 and Asn-233 are each glycosylated (N-linked (GlcNAc...) asparagine). Residues 240–264 (PILLTISILSFFSVALLVILACVLW) traverse the membrane as a helical segment. Residues 265–459 (KKRIKPIVWP…VTMSSFYQNQ (195 aa)) lie on the Cytoplasmic side of the membrane. Residues 272–280 (VWPSLPDHK) carry the Box 1 motif motif. Position 282 is a phosphothreonine; by PKC (Thr-282).

This sequence belongs to the type I cytokine receptor family. Type 4 subfamily. The IL7 receptor is a heterodimer of IL7R and IL2RG. The TSLP receptor is a heterodimer of CRLF2 and IL7R. Interacts with CD53. N-glycosylated IL-7Ralpha binds IL7 300-fold more tightly than the unglycosylated form. In terms of processing, ubiquitinated by MARCHF8; leading to lysosomal degradation.

The protein localises to the cell membrane. The protein resides in the secreted. Its function is as follows. Receptor for interleukin-7. Also acts as a receptor for thymic stromal lymphopoietin (TSLP). The polypeptide is Interleukin-7 receptor subunit alpha (IL7R) (Homo sapiens (Human)).